The primary structure comprises 157 residues: Transcriptional repressor NrdR (157 aa).

A zinc finger lies at 3 to 34 (CPFCRHPDSRVVDSRTSDDGLSIRRRRQCPEC). Residues 46–136 (LSVIKRNGVV…VYQGFDSLDD (91 aa)) enclose the ATP-cone domain.

The protein belongs to the NrdR family. It depends on Zn(2+) as a cofactor.

In terms of biological role, negatively regulates transcription of bacterial ribonucleotide reductase nrd genes and operons by binding to NrdR-boxes. The protein is Transcriptional repressor NrdR of Clavibacter sepedonicus (Clavibacter michiganensis subsp. sepedonicus).